The primary structure comprises 197 residues: 3-isopropylmalate dehydratase small subunit (197 aa).

The protein belongs to the LeuD family. LeuD type 1 subfamily. Heterodimer of LeuC and LeuD.

It carries out the reaction (2R,3S)-3-isopropylmalate = (2S)-2-isopropylmalate. It functions in the pathway amino-acid biosynthesis; L-leucine biosynthesis; L-leucine from 3-methyl-2-oxobutanoate: step 2/4. Its function is as follows. Catalyzes the isomerization between 2-isopropylmalate and 3-isopropylmalate, via the formation of 2-isopropylmaleate. This Acidothermus cellulolyticus (strain ATCC 43068 / DSM 8971 / 11B) protein is 3-isopropylmalate dehydratase small subunit.